We begin with the raw amino-acid sequence, 816 residues long: Mitogen-activated protein kinase 7 (816 aa).

The interval 1–26 is disordered; it reads MAEPLKEEDGEDGSAEPPGPVKAEPA. A2 carries the post-translational modification N-acetylalanine. The tract at residues 2–77 is required for cytoplasmic targeting; that stretch reads AEPLKEEDGE…VVSSARRRLT (76 aa). The 293-residue stretch at 55 to 347 folds into the Protein kinase domain; the sequence is YEIIETIGNG…AAAALRHPFL (293 aa). ATP contacts are provided by residues 61–69 and K84; that span reads IGNGAYGVV. The interval 78 to 139 is required for binding to MAP2K5; the sequence is GQQVAIKKIP…FKSVYVVLDL (62 aa). The tract at residues 140-406 is necessary for oligomerization; sequence MESDLHQIIH…QQIRFQPSLQ (267 aa). The Proton acceptor role is filled by D182. Residues 219-221 carry the TXY motif; it reads TEY. A disordered region spans residues 406–737; sequence QPVASEPGCP…PVFSGTPKGS (332 aa). Residues 407–806 are may not be required for kinase activity; required to stimulate MEF2C activity; sequence PVASEPGCPD…REIQMDSPML (400 aa). Pro residues-rich tracts occupy residues 433–445 and 454–463; these read SPPP…PGPA and QPPPPVSEPA. A compositionally biased stretch (low complexity) spans 476 to 486; sequence KAALKAALLKS. 3 stretches are compositionally biased toward basic and acidic residues: residues 502 to 519, 527 to 544, and 563 to 573; these read PEPR…EREE, RAKE…KERG, and DNDRSLLERWT. The short motif at 505 to 539 is the Nuclear localization signal element; the sequence is RKPVTAQERQREREEKRRRRQERAKEREKRRQERE. Residues 578 to 587 show a composition bias toward low complexity; it reads PAAPALTSVP. 2 stretches are compositionally biased toward pro residues: residues 588–610 and 628–655; these read APAP…PGPV and VPQP…PAPP. Low complexity predominate over residues 676–685; it reads PGSSTPGVLP. Over residues 686-695 the composition is skewed to pro residues; that stretch reads YFPPGLPPPD. Positions 701–720 are enriched in polar residues; the sequence is QSSMSESPDVNLVTQQLSKS. S720 carries the phosphoserine modification. A Phosphothreonine modification is found at T733.

Belongs to the protein kinase superfamily. CMGC Ser/Thr protein kinase family. MAP kinase subfamily. As to quaternary structure, interacts with MAP2K5. Forms oligomers. Interacts with MEF2A, MEF2C and MEF2D; the interaction phosphorylates the MEF2s and enhances transcriptional activity of MEF2A, MEF2C but not MEF2D. Interacts with SGK1. Preferentially interacts with PML isoform PML-4 but shows interaction also with its other isoforms: isoform PML-1, isoform PML-2, isoform PML-3 and isoform PML-6. Interacts (via N-terminal half) with HSP90AB1-CDC37 chaperone complex in resting cells; the interaction is MAP2K5-independent and prevents MAPK7 from ubiquitination and proteasomal degradation. Interacts with STUB1/CHIP; the interaction is enhanced in the presence of IGF1 or MAP2K5 and promotes STUB1/CHIP E3 ligase activity. It depends on Mg(2+) as a cofactor. Dually phosphorylated on Thr-219 and Tyr-221, which activates the enzyme. Autophosphorylated in vitro on threonine and tyrosine residues when the C-terminal part of the kinase, which could have a regulatory role, is absent. As to expression, expressed in many adult tissues. Abundant in heart, placenta, lung, kidney and skeletal muscle. Not detectable in liver.

The protein resides in the cytoplasm. Its subcellular location is the nucleus. It localises to the PML body. The catalysed reaction is L-seryl-[protein] + ATP = O-phospho-L-seryl-[protein] + ADP + H(+). The enzyme catalyses L-threonyl-[protein] + ATP = O-phospho-L-threonyl-[protein] + ADP + H(+). Activated by tyrosine and threonine phosphorylation. Activated in response to hyperosmolarity, hydrogen peroxide, and epidermal growth factor (EGF). Plays a role in various cellular processes such as proliferation, differentiation and cell survival. The upstream activator of MAPK7 is the MAPK kinase MAP2K5. Upon activation, it translocates to the nucleus and phosphorylates various downstream targets including MEF2C. EGF activates MAPK7 through a Ras-independent and MAP2K5-dependent pathway. As part of the MAPK/ERK signaling pathway, acts as a negative regulator of apoptosis in cardiomyocytes via interaction with STUB1/CHIP and promotion of STUB1-mediated ubiquitination and degradation of ICER-type isoforms of CREM. May have a role in muscle cell differentiation. May be important for endothelial function and maintenance of blood vessel integrity. MAP2K5 and MAPK7 interact specifically with one another and not with MEK1/ERK1 or MEK2/ERK2 pathways. Phosphorylates SGK1 at Ser-78 and this is required for growth factor-induced cell cycle progression. Involved in the regulation of p53/TP53 by disrupting the PML-MDM2 interaction. The polypeptide is Mitogen-activated protein kinase 7 (MAPK7) (Homo sapiens (Human)).